The following is a 400-amino-acid chain: Enoyl-[acyl-carrier-protein] reductase [NADH] (400 aa).

NAD(+) is bound by residues 48 to 53, 74 to 75, 111 to 112, and 139 to 140; these read GSSSGY, FE, DA, and LA. Y225 contributes to the substrate binding site. Catalysis depends on Y235, which acts as the Proton donor. Residues K244 and 273-275 each bind NAD(+); that span reads VVT.

It belongs to the TER reductase family. In terms of assembly, monomer.

The catalysed reaction is a 2,3-saturated acyl-[ACP] + NAD(+) = a (2E)-enoyl-[ACP] + NADH + H(+). It functions in the pathway lipid metabolism; fatty acid biosynthesis. Involved in the final reduction of the elongation cycle of fatty acid synthesis (FAS II). Catalyzes the reduction of a carbon-carbon double bond in an enoyl moiety that is covalently linked to an acyl carrier protein (ACP). This Shewanella pealeana (strain ATCC 700345 / ANG-SQ1) protein is Enoyl-[acyl-carrier-protein] reductase [NADH].